The chain runs to 319 residues: Acetyl-coenzyme A carboxylase carboxyl transferase subunit alpha (319 aa).

The region spanning 36 to 293 is the CoA carboxyltransferase C-terminal domain; that stretch reads EVERLKTKLE…HDAFLSELDR (258 aa).

It belongs to the AccA family. Acetyl-CoA carboxylase is a heterohexamer composed of biotin carboxyl carrier protein (AccB), biotin carboxylase (AccC) and two subunits each of ACCase subunit alpha (AccA) and ACCase subunit beta (AccD).

Its subcellular location is the cytoplasm. It carries out the reaction N(6)-carboxybiotinyl-L-lysyl-[protein] + acetyl-CoA = N(6)-biotinyl-L-lysyl-[protein] + malonyl-CoA. It participates in lipid metabolism; malonyl-CoA biosynthesis; malonyl-CoA from acetyl-CoA: step 1/1. In terms of biological role, component of the acetyl coenzyme A carboxylase (ACC) complex. First, biotin carboxylase catalyzes the carboxylation of biotin on its carrier protein (BCCP) and then the CO(2) group is transferred by the carboxyltransferase to acetyl-CoA to form malonyl-CoA. The sequence is that of Acetyl-coenzyme A carboxylase carboxyl transferase subunit alpha from Dichelobacter nodosus (strain VCS1703A).